The primary structure comprises 172 residues: Adenine phosphoribosyltransferase (172 aa).

The protein belongs to the purine/pyrimidine phosphoribosyltransferase family. Homodimer.

It is found in the cytoplasm. It carries out the reaction AMP + diphosphate = 5-phospho-alpha-D-ribose 1-diphosphate + adenine. Its pathway is purine metabolism; AMP biosynthesis via salvage pathway; AMP from adenine: step 1/1. Its function is as follows. Catalyzes a salvage reaction resulting in the formation of AMP, that is energically less costly than de novo synthesis. This Clostridium perfringens (strain ATCC 13124 / DSM 756 / JCM 1290 / NCIMB 6125 / NCTC 8237 / Type A) protein is Adenine phosphoribosyltransferase.